A 506-amino-acid chain; its full sequence is Probable alpha-L-arabinofuranosidase B (506 aa).

A signal peptide spans 1 to 26 (MLLPRGFNRAVVTALGVVGTGTLVAA). Positions 27-343 (GPCDIYSSGG…ANIVAAKYAV (317 aa)) are catalytic. Cystine bridges form between cysteine 29/cysteine 39, cysteine 89/cysteine 94, and cysteine 184/cysteine 185. Residue aspartate 227 coordinates substrate. The active-site Nucleophile is the glutamate 229. Asparagine 230 is a substrate binding site. Asparagine 285 carries N-linked (GlcNAc...) asparagine glycosylation. Glycine 304 is a binding site for substrate. Aspartate 305 functions as the Proton donor in the catalytic mechanism. The interval 344–506 (APLTSGPSLT…VSWVVSTSFA (163 aa)) is ABD. N-linked (GlcNAc...) asparagine glycosylation occurs at asparagine 375. Cysteine 409 and cysteine 447 are joined by a disulfide. Substrate-binding residues include histidine 424, phenylalanine 427, aspartate 443, histidine 471, leucine 476, and aspartate 496.

The protein belongs to the glycosyl hydrolase 54 family.

Its subcellular location is the secreted. The enzyme catalyses Hydrolysis of terminal non-reducing alpha-L-arabinofuranoside residues in alpha-L-arabinosides.. It functions in the pathway glycan metabolism; L-arabinan degradation. Its function is as follows. Alpha-L-arabinofuranosidase involved in the degradation of arabinoxylan, a major component of plant hemicellulose. Able to hydrolyze 1,5-, 1,3- and 1,2-alpha-linkages not only in L-arabinofuranosyl oligosaccharides, but also in polysaccharides containing terminal non-reducing L-arabinofuranoses in side chains, like L-arabinan, arabinogalactan and arabinoxylan. The polypeptide is Probable alpha-L-arabinofuranosidase B (abfB) (Aspergillus terreus (strain NIH 2624 / FGSC A1156)).